Consider the following 464-residue polypeptide: 2-oxoadipate dioxygenase/decarboxylase (464 aa).

His-70, Arg-74, and His-226 together coordinate 2-oxoadipate. His-70 lines the Fe(2+) pocket. Fe(2+)-binding residues include His-226 and Glu-294. Val-402 contributes to the 2-oxoadipate binding site.

Belongs to the 2-oxoadipate dioxygenase/decarboxylase family. The cofactor is Fe(2+).

It carries out the reaction 2-oxoadipate + O2 = (R)-2-hydroxyglutarate + CO2. It functions in the pathway amino-acid degradation. Inhibited by EDTA. In terms of biological role, catalyzes the decarboxylation and hydroxylation of 2-oxoadipate (2OA) to form D-2-hydroxyglutarate (D-2-HGA). Is specific for 2-oxoadipate. Is involved in a D-lysine catabolic pathway. This chain is 2-oxoadipate dioxygenase/decarboxylase, found in Pseudomonas putida (strain ATCC 47054 / DSM 6125 / CFBP 8728 / NCIMB 11950 / KT2440).